Reading from the N-terminus, the 151-residue chain is UPF0208 membrane protein YfbV (151 aa).

The next 2 membrane-spanning stretches (helical) occupy residues 46–65 (YAIR…QIAL) and 69–91 (LGPA…WWLG).

The protein belongs to the UPF0208 family.

Its subcellular location is the cell inner membrane. In Shigella flexneri serotype 5b (strain 8401), this protein is UPF0208 membrane protein YfbV.